We begin with the raw amino-acid sequence, 147 residues long: Fibromodulin (147 aa).

LRR repeat units follow at residues 1–15, 16–37, 40–61, 63–84, 85–105, and 108–128; these read LDHNNLTRMPGPLPR, SLRELHLDHNQISRVPNNALEG, NLTALYLQHNEIQEVGSSMRGL, SLILLDLSYNHLRRVPDGLPSA, LEQLYLEHNNVYTVPDSYFRG, and KLLYVRLSHNSLTNSGLASNT. Asparagine 5 is a glycosylation site (N-linked (GlcNAc...) asparagine). Asparagine 40 is a glycosylation site (N-linked (GlcNAc...) asparagine). N-linked (GlcNAc...) asparagine glycosylation occurs at asparagine 130. Residues 133 to 147 form an LRR 7 repeat; the sequence is SLLELDLSYNQLQKI.

This sequence belongs to the small leucine-rich proteoglycan (SLRP) family. SLRP class II subfamily. As to quaternary structure, binds to type I and type II collagen. Post-translationally, binds keratan sulfate chains. In terms of processing, sulfated on tyrosine residues. The N-terminus is blocked by a pyrrolidone carboxylic acid generated by post-translational modification of N-terminal glutamine.

It is found in the secreted. The protein resides in the extracellular space. Its subcellular location is the extracellular matrix. Functionally, affects the rate of fibrils formation. May have a primary role in collagen fibrillogenesis. The polypeptide is Fibromodulin (FMOD) (Oryctolagus cuniculus (Rabbit)).